A 349-amino-acid polypeptide reads, in one-letter code: Phosphoribosylformylglycinamidine cyclo-ligase (349 aa).

Belongs to the AIR synthase family.

The protein localises to the cytoplasm. It catalyses the reaction 2-formamido-N(1)-(5-O-phospho-beta-D-ribosyl)acetamidine + ATP = 5-amino-1-(5-phospho-beta-D-ribosyl)imidazole + ADP + phosphate + H(+). It functions in the pathway purine metabolism; IMP biosynthesis via de novo pathway; 5-amino-1-(5-phospho-D-ribosyl)imidazole from N(2)-formyl-N(1)-(5-phospho-D-ribosyl)glycinamide: step 2/2. The sequence is that of Phosphoribosylformylglycinamidine cyclo-ligase from Methanococcus vannielii (strain ATCC 35089 / DSM 1224 / JCM 13029 / OCM 148 / SB).